Consider the following 183-residue polypeptide: Threonylcarbamoyl-AMP synthase (183 aa).

A YrdC-like domain is found at 1–183; the sequence is MNITQIIEKL…LFTNQLVRQG (183 aa).

This sequence belongs to the SUA5 family. TsaC subfamily.

It is found in the cytoplasm. It catalyses the reaction L-threonine + hydrogencarbonate + ATP = L-threonylcarbamoyladenylate + diphosphate + H2O. Functionally, required for the formation of a threonylcarbamoyl group on adenosine at position 37 (t(6)A37) in tRNAs that read codons beginning with adenine. Catalyzes the conversion of L-threonine, HCO(3)(-)/CO(2) and ATP to give threonylcarbamoyl-AMP (TC-AMP) as the acyladenylate intermediate, with the release of diphosphate. This chain is Threonylcarbamoyl-AMP synthase, found in Histophilus somni (strain 129Pt) (Haemophilus somnus).